Here is a 69-residue protein sequence, read N- to C-terminus: UPF0150 protein AF_1072 (69 aa).

This sequence belongs to the UPF0150 family.

This is UPF0150 protein AF_1072 from Archaeoglobus fulgidus (strain ATCC 49558 / DSM 4304 / JCM 9628 / NBRC 100126 / VC-16).